Reading from the N-terminus, the 465-residue chain is MFLATLYFALPLLDLLLSAEVSGGDRLDCVKASDQCLKEQSCSTKYRTLRQCVAGKETNFSLASGLEAKDECRSAMEALKQKSLYNCRCKRGMKKEKNCLRIYWSMYQSLQGNDLLEDSPYEPVNSRLSDIFRVVPFISDVFQQVEHIPKGNNCLDAAKACNLDDICKKYRSAYITPCTTSVSNDVCNRRKCHKALRQFFDKVPAKHSYGMLFCSCRDIACTERRRQTIVPVCSYEEREKPNCLNLQDSCKTNYICRSRLADFFTNCQPESRSVSSCLKENYADCLLAYSGLIGTVMTPNYIDSSSLSVAPWCDCSNSGNDLEECLKFLNFFKDNTCLKNAIQAFGNGSDVTVWQPAFPVQTTTATTTTALRVKNKPLGPAGSENEIPTHVLPPCANLQAQKLKSNVSGNTHLCISNGNYEKEGLGASSHITTKSMAAPPSCGLSPLLVLVVTALSTLLSLTETS.

The signal sequence occupies residues 1-24; it reads MFLATLYFALPLLDLLLSAEVSGG. A run of 3 repeats spans residues 25–113, 150–238, and 239–342. A disulfide bridge links cysteine 36 with cysteine 42. The N-linked (GlcNAc...) asparagine glycan is linked to asparagine 59. 10 disulfide bridges follow: cysteine 154/cysteine 214, cysteine 161/cysteine 167, cysteine 178/cysteine 192, cysteine 187/cysteine 233, cysteine 216/cysteine 221, cysteine 243/cysteine 313, cysteine 250/cysteine 256, cysteine 267/cysteine 285, cysteine 277/cysteine 337, and cysteine 315/cysteine 325. Asparagine 347 and asparagine 406 each carry an N-linked (GlcNAc...) asparagine glycan. The GPI-anchor amidated serine moiety is linked to residue serine 429. The propeptide at 430-465 is removed in mature form; the sequence is HITTKSMAAPPSCGLSPLLVLVVTALSTLLSLTETS.

It belongs to the GDNFR family. As to quaternary structure, interacts with GDNF ligand and RET: forms a 2:2:2 ternary complex composed of GDNF ligand, GFRA1 and RET receptor. Interacts with SORL1, either alone or in complex with GDNF. Interaction between SORL1 and GFRA1 leads to GFRA1 internalization, but not degradation.

It is found in the cell membrane. The protein localises to the golgi apparatus. It localises to the trans-Golgi network. The protein resides in the endosome. Its subcellular location is the multivesicular body. In terms of biological role, coreceptor for GDNF, a neurotrophic factor that enhances survival and morphological differentiation of dopaminergic neurons and increases their high-affinity dopamine uptake. GDNF-binding leads to autophosphorylation and activation of the RET receptor. The chain is GDNF family receptor alpha-1 (GFRA1) from Homo sapiens (Human).